Here is a 277-residue protein sequence, read N- to C-terminus: Small ribosomal subunit protein uS5 (277 aa).

Residues 18–40 (AAGRPSWSWQRPGERARTPGRKA) form a disordered region. Over residues 29 to 40 (PGERARTPGRKA) the composition is skewed to basic and acidic residues. Positions 87 to 150 (LKDEVLKIMP…ILAKLSIIPV (64 aa)) constitute an S5 DRBM domain.

This sequence belongs to the universal ribosomal protein uS5 family. Component of the small ribosomal subunit.

It localises to the cytoplasm. The protein resides in the nucleus. It is found in the nucleolus. Functionally, component of the ribosome, a large ribonucleoprotein complex responsible for the synthesis of proteins in the cell. The small ribosomal subunit (SSU) binds messenger RNAs (mRNAs) and translates the encoded message by selecting cognate aminoacyl-transfer RNA (tRNA) molecules. The large subunit (LSU) contains the ribosomal catalytic site termed the peptidyl transferase center (PTC), which catalyzes the formation of peptide bonds, thereby polymerizing the amino acids delivered by tRNAs into a polypeptide chain. The nascent polypeptides leave the ribosome through a tunnel in the LSU and interact with protein factors that function in enzymatic processing, targeting, and the membrane insertion of nascent chains at the exit of the ribosomal tunnel. Plays a role in the assembly and function of the 40S ribosomal subunit. Mutations in this protein affects the control of translational fidelity. Involved in nucleolar processing of pre-18S ribosomal RNA and ribosome assembly. This Ictalurus punctatus (Channel catfish) protein is Small ribosomal subunit protein uS5 (rps2).